Reading from the N-terminus, the 239-residue chain is Exosome complex exonuclease RRP46 homolog (239 aa).

Met-1 bears the N-acetylmethionine mark.

The protein belongs to the RNase PH family. Probable component of the RNA exosome complex.

It is found in the nucleus. It localises to the nucleolus. Its function is as follows. Probable component of the exosome 3'-&gt;5' exoribonuclease complex, a complex that degrades inherently unstable mRNAs containing AU-rich elements (AREs) within their 3'-untranslated regions. In Arabidopsis thaliana (Mouse-ear cress), this protein is Exosome complex exonuclease RRP46 homolog.